The following is a 220-amino-acid chain: Uracil-DNA glycosylase (220 aa).

Residue aspartate 60 is the Proton acceptor of the active site.

The protein belongs to the uracil-DNA glycosylase (UDG) superfamily. UNG family.

The protein resides in the cytoplasm. It carries out the reaction Hydrolyzes single-stranded DNA or mismatched double-stranded DNA and polynucleotides, releasing free uracil.. Its function is as follows. Excises uracil residues from the DNA which can arise as a result of misincorporation of dUMP residues by DNA polymerase or due to deamination of cytosine. The sequence is that of Uracil-DNA glycosylase from Francisella tularensis subsp. novicida (strain U112).